The chain runs to 183 residues: Glutathione-regulated potassium-efflux system ancillary protein KefG (183 aa).

The protein belongs to the NAD(P)H dehydrogenase (quinone) family. KefG subfamily. As to quaternary structure, interacts with KefB.

Its subcellular location is the cell inner membrane. It carries out the reaction a quinone + NADH + H(+) = a quinol + NAD(+). The catalysed reaction is a quinone + NADPH + H(+) = a quinol + NADP(+). Its function is as follows. Regulatory subunit of a potassium efflux system that confers protection against electrophiles. Required for full activity of KefB. This chain is Glutathione-regulated potassium-efflux system ancillary protein KefG, found in Enterobacter sp. (strain 638).